The primary structure comprises 716 residues: Radial spoke head protein 4 homolog A (716 aa).

Disordered regions lie at residues 1 to 164 (MEDS…CGRR), 375 to 410 (EGED…PKSF), 506 to 526 (GEEE…FEEN), and 697 to 716 (LLAA…DDYD). Positions 8-25 (KQEKENQEELGETRRPWE) are enriched in basic and acidic residues. Composition is skewed to low complexity over residues 29 to 42 (AASP…SSEP), 54 to 66 (QSRS…PQSR), and 80 to 100 (SSPA…LAPA). Over residues 140 to 156 (HHTSQSEGNTFQQSQQP) the composition is skewed to polar residues. A compositionally biased stretch (acidic residues) spans 375–389 (EGEDEEEVEEEDVAE). The residue at position 396 (Ser396) is a Phosphoserine. Acidic residues-rich tracts occupy residues 506–516 (GEEEGEEEEEA) and 701–716 (ENEE…DDYD).

It belongs to the flagellar radial spoke RSP4/6 family. Interacts with RSPH6A. As to expression, expressed in trachea, lungs, and testes. Very strong expression is detected in nasal brushings.

The protein localises to the cytoplasm. The protein resides in the cytoskeleton. Its subcellular location is the cilium axoneme. It is found in the cell projection. It localises to the cilium. Its function is as follows. Component of the axonemal radial spoke head which plays an important role in ciliary motility. Essential for triplet radial spokes (RS1, RS2 and RS3) head assembly in the motile cilia. The polypeptide is Radial spoke head protein 4 homolog A (RSPH4A) (Homo sapiens (Human)).